The sequence spans 357 residues: S-adenosylmethionine:tRNA ribosyltransferase-isomerase (357 aa).

Belongs to the QueA family. Monomer.

The protein localises to the cytoplasm. It carries out the reaction 7-aminomethyl-7-carbaguanosine(34) in tRNA + S-adenosyl-L-methionine = epoxyqueuosine(34) in tRNA + adenine + L-methionine + 2 H(+). It functions in the pathway tRNA modification; tRNA-queuosine biosynthesis. Its function is as follows. Transfers and isomerizes the ribose moiety from AdoMet to the 7-aminomethyl group of 7-deazaguanine (preQ1-tRNA) to give epoxyqueuosine (oQ-tRNA). The polypeptide is S-adenosylmethionine:tRNA ribosyltransferase-isomerase (Buchnera aphidicola subsp. Acyrthosiphon pisum (strain Tuc7)).